The following is a 312-amino-acid chain: Non-structural protein 12A (312 aa).

The span at 1-23 shows a compositional bias: low complexity; sequence MFKSGSGSLKRSGSISSVKSFSG. Disordered regions lie at residues 1–37, 62–99, and 111–161; these read MFKSGSGSLKRSGSISSVKSFSGDSEKGLPPISRGSV, FVPEKTKSEGNLKDKSSVITGNFGSSGPINAHTNQNAD, and ESSK…GTGD. The span at 63-77 shows a compositional bias: basic and acidic residues; the sequence is VPEKTKSEGNLKDKS. The span at 78 to 98 shows a compositional bias: polar residues; it reads SVITGNFGSSGPINAHTNQNA. Positions 122 to 134 are enriched in basic and acidic residues; sequence DARHTATDSRLSQ.

It belongs to the phytoreovirus non-structural protein Pns12A family.

Its subcellular location is the host cytoplasm. Its function is as follows. Constituent of viral factories. Binds to ssRNA and dsRNA. This chain is Non-structural protein 12A, found in Alopecurus aequalis (Barnyard grass).